The chain runs to 600 residues: Chaperone protein DnaK (600 aa).

Threonine 175 carries the post-translational modification Phosphothreonine; by autocatalysis. The disordered stretch occupies residues 572 to 600; it reads FAQQTQQQDPNNQKDDVTEATVTDDSTKK. Over residues 591–600 the composition is skewed to polar residues; that stretch reads ATVTDDSTKK.

The protein belongs to the heat shock protein 70 family.

Its function is as follows. Acts as a chaperone. The sequence is that of Chaperone protein DnaK from Ureaplasma urealyticum serovar 10 (strain ATCC 33699 / Western).